Reading from the N-terminus, the 120-residue chain is Peptidyl-tRNA hydrolase (120 aa).

This sequence belongs to the PTH2 family.

It is found in the cytoplasm. The enzyme catalyses an N-acyl-L-alpha-aminoacyl-tRNA + H2O = an N-acyl-L-amino acid + a tRNA + H(+). Functionally, the natural substrate for this enzyme may be peptidyl-tRNAs which drop off the ribosome during protein synthesis. This chain is Peptidyl-tRNA hydrolase, found in Sulfolobus acidocaldarius (strain ATCC 33909 / DSM 639 / JCM 8929 / NBRC 15157 / NCIMB 11770).